The primary structure comprises 35 residues: Small toxic polypeptide LdrB (35 aa).

Residues Phe-10–Trp-30 form a helical membrane-spanning segment.

Belongs to the Ldr toxic peptide family.

The protein resides in the cell inner membrane. In terms of biological role, toxic component of a type I toxin-antitoxin (TA) system. Overexpression causes rapid cell killing, probably by disrupting the cell inner membrane and disruption of ATP synthesis. In Escherichia coli (strain K12), this protein is Small toxic polypeptide LdrB (ldrB).